The following is a 340-amino-acid chain: Coproporphyrin III ferrochelatase (340 aa).

Residues S52 and Y116 each contribute to the Fe-coproporphyrin III site. Residues H172 and E255 each coordinate Fe(2+).

The protein belongs to the ferrochelatase family.

The protein resides in the cytoplasm. The catalysed reaction is Fe-coproporphyrin III + 2 H(+) = coproporphyrin III + Fe(2+). It participates in porphyrin-containing compound metabolism; protoheme biosynthesis. Involved in coproporphyrin-dependent heme b biosynthesis. Catalyzes the insertion of ferrous iron into coproporphyrin III to form Fe-coproporphyrin III. The protein is Coproporphyrin III ferrochelatase of Mycobacterium marinum (strain ATCC BAA-535 / M).